The sequence spans 225 residues: Phosphoserine phosphatase (225 aa).

Met1 is modified (N-acetylmethionine). The active-site Nucleophile is Asp20. Mg(2+)-binding residues include Asp20 and Asp22. 20-22 contributes to the L-serine binding site; that stretch reads DVD. The active-site Proton donor is the Asp22. Met52 contributes to the O-phospho-L-serine binding site. Gly53 contacts phosphate. Residues 109-111 and Lys158 each bind L-serine; that span reads SGG. O-phospho-L-serine-binding positions include 109 to 111 and Lys158; that span reads SGG. Asp179 serves as a coordination point for Mg(2+). Position 182 (Thr182) interacts with O-phospho-L-serine. Residue Thr182 participates in phosphate binding.

This sequence belongs to the HAD-like hydrolase superfamily. SerB family. In terms of assembly, homodimer. The cofactor is Mg(2+).

The protein resides in the cytoplasm. The protein localises to the cytosol. The enzyme catalyses O-phospho-L-serine + H2O = L-serine + phosphate. It catalyses the reaction O-phospho-D-serine + H2O = D-serine + phosphate. It participates in amino-acid biosynthesis; L-serine biosynthesis; L-serine from 3-phospho-D-glycerate: step 3/3. Functionally, catalyzes the last irreversible step in the biosynthesis of L-serine from carbohydrates, the dephosphorylation of O-phospho-L-serine to L-serine. L-serine can then be used in protein synthesis, to produce other amino acids, in nucleotide metabolism or in glutathione synthesis, or can be racemized to D-serine, a neuromodulator. May also act on O-phospho-D-serine. This chain is Phosphoserine phosphatase, found in Rattus norvegicus (Rat).